The following is a 332-amino-acid chain: Fructose-1,6-bisphosphatase class 1 (332 aa).

Positions 89, 110, 112, and 113 each coordinate Mg(2+). Residues 113–116 (DGSS), asparagine 206, tyrosine 239, 257–259 (YLY), and lysine 269 each bind substrate. Mg(2+) is bound at residue glutamate 275.

This sequence belongs to the FBPase class 1 family. Homotetramer. Mg(2+) serves as cofactor.

The protein localises to the cytoplasm. It catalyses the reaction beta-D-fructose 1,6-bisphosphate + H2O = beta-D-fructose 6-phosphate + phosphate. It functions in the pathway carbohydrate biosynthesis; gluconeogenesis. In Erwinia tasmaniensis (strain DSM 17950 / CFBP 7177 / CIP 109463 / NCPPB 4357 / Et1/99), this protein is Fructose-1,6-bisphosphatase class 1.